We begin with the raw amino-acid sequence, 210 residues long: Protein-L-isoaspartate O-methyltransferase (210 aa).

Residue serine 52 is part of the active site.

Belongs to the methyltransferase superfamily. L-isoaspartyl/D-aspartyl protein methyltransferase family.

It is found in the cytoplasm. The catalysed reaction is [protein]-L-isoaspartate + S-adenosyl-L-methionine = [protein]-L-isoaspartate alpha-methyl ester + S-adenosyl-L-homocysteine. In terms of biological role, catalyzes the methyl esterification of L-isoaspartyl residues in peptides and proteins that result from spontaneous decomposition of normal L-aspartyl and L-asparaginyl residues. It plays a role in the repair and/or degradation of damaged proteins. This is Protein-L-isoaspartate O-methyltransferase from Protochlamydia amoebophila (strain UWE25).